A 445-amino-acid polypeptide reads, in one-letter code: Phosphoglucosamine mutase (445 aa).

The active-site Phosphoserine intermediate is the S102. Residues S102, D241, D243, and D245 each coordinate Mg(2+). S102 is subject to Phosphoserine.

Belongs to the phosphohexose mutase family. Mg(2+) serves as cofactor. Activated by phosphorylation.

The catalysed reaction is alpha-D-glucosamine 1-phosphate = D-glucosamine 6-phosphate. Functionally, catalyzes the conversion of glucosamine-6-phosphate to glucosamine-1-phosphate. In Shewanella baltica (strain OS155 / ATCC BAA-1091), this protein is Phosphoglucosamine mutase.